Reading from the N-terminus, the 105-residue chain is Large ribosomal subunit protein uL23 (105 aa).

It belongs to the universal ribosomal protein uL23 family. In terms of assembly, part of the 50S ribosomal subunit. Contacts protein L29, and trigger factor when it is bound to the ribosome.

In terms of biological role, one of the early assembly proteins it binds 23S rRNA. One of the proteins that surrounds the polypeptide exit tunnel on the outside of the ribosome. Forms the main docking site for trigger factor binding to the ribosome. In Chloroherpeton thalassium (strain ATCC 35110 / GB-78), this protein is Large ribosomal subunit protein uL23.